The chain runs to 171 residues: Protein TIFY 11d (171 aa).

Positions 65–100 (PSAGTAPLTIFYDGRMVVVDDVPAEKAAELMRLAGS) constitute a Tify domain. The Jas motif lies at 117-142 (PIARKASLQRFLQKRKHRITTTSEPY). A Nuclear localization signal motif is present at residues 119 to 126 (ARKASLQR).

It belongs to the TIFY/JAZ family. As to quaternary structure, interacts with BHLH148 and COI1A. Interacts with COI1A, COI1B and COI2 in a coronatine-dependent manner. Coronatine is an analog of jasmonoyl isoleucine (JA-Ile). In terms of processing, ubiquitinated. Increase in jasmonoyl isoleucine (JA-Ile) levels mediates its degradation via COI1A-mediated proteasome pathway.

The protein resides in the nucleus. In terms of biological role, repressor of jasmonate (JA) responses. May act on an initial response of JA-regulated gene expression toward drought tolerance as part of a BHLH148-TIFY11D/JAZ12-COI1A complex. In Oryza sativa subsp. indica (Rice), this protein is Protein TIFY 11d.